The sequence spans 228 residues: Large ribosomal subunit protein bL25 (228 aa).

Residues 1–24 (MATVMELKATARPKSGKGAARAER) form a disordered region.

Belongs to the bacterial ribosomal protein bL25 family. CTC subfamily. As to quaternary structure, part of the 50S ribosomal subunit; part of the 5S rRNA/L5/L18/L25 subcomplex. Contacts the 5S rRNA. Binds to the 5S rRNA independently of L5 and L18.

In terms of biological role, this is one of the proteins that binds to the 5S RNA in the ribosome where it forms part of the central protuberance. This Nitrobacter winogradskyi (strain ATCC 25391 / DSM 10237 / CIP 104748 / NCIMB 11846 / Nb-255) protein is Large ribosomal subunit protein bL25.